A 425-amino-acid polypeptide reads, in one-letter code: MNSETLFQRSKQVVPGGVHSPVRSFSSVGGTPIFFSEARGAYLKSVEGNDFIDYCLSFGPLLFGHRHPEIQEVVEDTVNKAWSFGACEPYSLELAEFITERIPWVEKIRFVNSGTEAVMSALRVARAATGRNKILKFDGCYHGHLDQLLVKSGSGLAGLSSSDSKGIGPEIIQNTLVLPLDDESKLEELFQREGSNIACLAIEPLPANYGLLPQRIEFLKKCRELTTKYGVLLLFDEVISGFRVSFQGMAGITGIIPDLVCYGKIIGGGFPVGAYAGKRELMDLVAPSGPVYQAGTLSANPIGMRAGLKTLTKAWTENPYPALESATKQLTDGILTLLSEKGDTNWEAVTFGSLFWLKGKTENPIRRIDQIPGTHKSNFATLFHKLLKQGVYLAPSGYEVGFLSTAHTNDIINLTLEKTKKALKD.

Position 264 is an N6-(pyridoxal phosphate)lysine (K264).

This sequence belongs to the class-III pyridoxal-phosphate-dependent aminotransferase family. HemL subfamily. Homodimer. It depends on pyridoxal 5'-phosphate as a cofactor.

The protein localises to the cytoplasm. It catalyses the reaction (S)-4-amino-5-oxopentanoate = 5-aminolevulinate. It participates in porphyrin-containing compound metabolism; protoporphyrin-IX biosynthesis; 5-aminolevulinate from L-glutamyl-tRNA(Glu): step 2/2. In Leptospira biflexa serovar Patoc (strain Patoc 1 / Ames), this protein is Glutamate-1-semialdehyde 2,1-aminomutase.